The primary structure comprises 482 residues: Probable 2-carboxy-D-arabinitol-1-phosphatase (482 aa).

A chloroplast-targeting transit peptide spans 1–34 (MISLPLTTPILPSRCLLHKTRRQNSTRRRLLIRS). His-55 serves as the catalytic Tele-phosphohistidine intermediate. Catalysis depends on Glu-129, which acts as the Proton donor/acceptor.

This sequence belongs to the phosphoglycerate mutase family.

The protein localises to the plastid. Its subcellular location is the chloroplast stroma. It carries out the reaction 2-carboxy-D-arabinitol 1-phosphate + H2O = 2-carboxy-D-arabinitol + phosphate. Its function is as follows. Phosphoglycerate mutase-like protein lacking PGM activity, but having 2-carboxy-D-arabinitol 1-phosphate (CA1P) phosphatase activity. Prevents the accumulation of D-glycero-2,3-pentodiulose-1,5-bisphosphate (PDBP) a potent inhibitor of ribulose-1,5-bisphosphate carboxylase (RuBisCO). PDBP is produced during the oxidation of ribulose-1,5-bisphosphate, the substrate of RuBisCO. The sequence is that of Probable 2-carboxy-D-arabinitol-1-phosphatase from Arabidopsis thaliana (Mouse-ear cress).